A 473-amino-acid polypeptide reads, in one-letter code: P3 protein (473 aa).

9 consecutive transmembrane segments (helical) span residues 25 to 45 (FVGM…AQVM), 221 to 241 (PMLL…FLMA), 249 to 269 (ALAL…SYLF), 277 to 297 (VTLA…FLPL), 316 to 336 (ISKI…GVVI), 356 to 376 (FILL…ILVG), 381 to 401 (IVLV…SLAI), 413 to 433 (VSIE…QLSL), and 446 to 466 (FIVA…QFIY).

It belongs to the bile acid:sodium symporter (BASS) (TC 2.A.28) family.

The protein localises to the membrane. In terms of biological role, the ubiquitous expression and the conservation of the sequence in distant animal species suggest that the gene codes for a protein with housekeeping functions. This chain is P3 protein (Slc10a3), found in Mus musculus (Mouse).